The primary structure comprises 256 residues: Imidazole glycerol phosphate synthase subunit HisF (256 aa).

Residues Asp11 and Asp130 contribute to the active site.

The protein belongs to the HisA/HisF family. Heterodimer of HisH and HisF.

Its subcellular location is the cytoplasm. It catalyses the reaction 5-[(5-phospho-1-deoxy-D-ribulos-1-ylimino)methylamino]-1-(5-phospho-beta-D-ribosyl)imidazole-4-carboxamide + L-glutamine = D-erythro-1-(imidazol-4-yl)glycerol 3-phosphate + 5-amino-1-(5-phospho-beta-D-ribosyl)imidazole-4-carboxamide + L-glutamate + H(+). It functions in the pathway amino-acid biosynthesis; L-histidine biosynthesis; L-histidine from 5-phospho-alpha-D-ribose 1-diphosphate: step 5/9. In terms of biological role, IGPS catalyzes the conversion of PRFAR and glutamine to IGP, AICAR and glutamate. The HisF subunit catalyzes the cyclization activity that produces IGP and AICAR from PRFAR using the ammonia provided by the HisH subunit. This chain is Imidazole glycerol phosphate synthase subunit HisF, found in Psychrobacter sp. (strain PRwf-1).